The following is a 1261-amino-acid chain: Mediator of RNA polymerase II transcription subunit 14 (1261 aa).

Residues 1–11 (MPNGKQQHEVT) show a composition bias toward basic and acidic residues. 3 disordered regions span residues 1–21 (MPNG…EIPH), 413–435 (NETA…GETE), and 1193–1220 (DNDI…ENET). Over residues 417-427 (IVDDNDNDNDD) the composition is skewed to acidic residues. The span at 1205–1220 (QNEKENSKTTSKENET) shows a compositional bias: basic and acidic residues.

This sequence belongs to the Mediator complex subunit 14 family. As to quaternary structure, component of the Mediator complex.

It is found in the nucleus. Functionally, component of the Mediator complex, a coactivator involved in the regulated transcription of nearly all RNA polymerase II-dependent genes. Mediator functions as a bridge to convey information from gene-specific regulatory proteins to the basal RNA polymerase II transcription machinery. Mediator is recruited to promoters by direct interactions with regulatory proteins and serves as a scaffold for the assembly of a functional preinitiation complex with RNA polymerase II and the general transcription factors. This Candida albicans (strain SC5314 / ATCC MYA-2876) (Yeast) protein is Mediator of RNA polymerase II transcription subunit 14 (MED14).